Consider the following 198-residue polypeptide: Recombination protein RecR (198 aa).

A C4-type zinc finger spans residues 57–72; it reads CDKCNTFTEAQICEVC. One can recognise a Toprim domain in the interval 80 to 175; the sequence is TLLCVVETPA…AVTRLARGVP (96 aa).

It belongs to the RecR family.

In terms of biological role, may play a role in DNA repair. It seems to be involved in an RecBC-independent recombinational process of DNA repair. It may act with RecF and RecO. The polypeptide is Recombination protein RecR (Burkholderia multivorans (strain ATCC 17616 / 249)).